The following is a 55-amino-acid chain: uncharacterized protein (55 aa).

This is an uncharacterized protein from Salmonella typhimurium (strain LT2 / SGSC1412 / ATCC 700720).